The sequence spans 309 residues: Ribonuclease Z (309 aa).

7 residues coordinate Zn(2+): His-63, His-65, Asp-67, His-68, His-145, Asp-216, and His-274. Catalysis depends on Asp-67, which acts as the Proton acceptor.

This sequence belongs to the RNase Z family. As to quaternary structure, homodimer. Zn(2+) serves as cofactor.

The catalysed reaction is Endonucleolytic cleavage of RNA, removing extra 3' nucleotides from tRNA precursor, generating 3' termini of tRNAs. A 3'-hydroxy group is left at the tRNA terminus and a 5'-phosphoryl group is left at the trailer molecule.. Its function is as follows. Zinc phosphodiesterase, which displays some tRNA 3'-processing endonuclease activity. Probably involved in tRNA maturation, by removing a 3'-trailer from precursor tRNA. This Streptococcus sanguinis (strain SK36) protein is Ribonuclease Z.